Consider the following 174-residue polypeptide: Transcription antitermination protein NusB (174 aa).

Residues 1–11 (MSEVETTNDQT) show a composition bias toward polar residues. The segment at 1–29 (MSEVETTNDQTPAPKRKDKKPSRSQLRSA) is disordered.

It belongs to the NusB family.

Involved in transcription antitermination. Required for transcription of ribosomal RNA (rRNA) genes. Binds specifically to the boxA antiterminator sequence of the ribosomal RNA (rrn) operons. The protein is Transcription antitermination protein NusB of Marinomonas sp. (strain MWYL1).